The following is a 54-amino-acid chain: Ribulose bisphosphate carboxylase large chain (54 aa).

A propeptide spanning residues 1-2 is cleaved from the precursor; it reads MS. N-acetylproline is present on Pro-3. Lys-14 carries the post-translational modification N6,N6,N6-trimethyllysine.

It belongs to the RuBisCO large chain family. Type I subfamily. As to quaternary structure, heterohexadecamer of 8 large chains and 8 small chains.

Its subcellular location is the plastid. It is found in the chloroplast. It catalyses the reaction 2 (2R)-3-phosphoglycerate + 2 H(+) = D-ribulose 1,5-bisphosphate + CO2 + H2O. The catalysed reaction is D-ribulose 1,5-bisphosphate + O2 = 2-phosphoglycolate + (2R)-3-phosphoglycerate + 2 H(+). Functionally, ruBisCO catalyzes two reactions: the carboxylation of D-ribulose 1,5-bisphosphate, the primary event in carbon dioxide fixation, as well as the oxidative fragmentation of the pentose substrate in the photorespiration process. Both reactions occur simultaneously and in competition at the same active site. The polypeptide is Ribulose bisphosphate carboxylase large chain (rbcL) (Rhamnus cathartica (Common buckthorn)).